Consider the following 287-residue polypeptide: Zinc transporter ZIP9 (287 aa).

The chain crosses the membrane as a helical span at residues 4 to 24; sequence FLSISLLSLAMLVGCYVAGII. An N-linked (GlcNAc...) asparagine glycan is attached at asparagine 29. The next 5 membrane-spanning stretches (helical) occupy residues 35-55, 107-127, 147-167, 177-197, and 211-231; these read LKLVTVLGAGLLCGTALAVIV, AYIGVSLVLGFVFMLLVDQIG, ITTTLGLVVHAAADGVALGAA, LIVFVAIMLHKAPAAFGLVSF, and HLLVFALAAPAMSMLTYLGLS. Asparagine 242 is a glycosylation site (N-linked (GlcNAc...) asparagine). Residues 245–265 form a helical membrane-spanning segment; the sequence is GVAMLFSAGTFLYVATVHVLP. Residues 268-287 are disordered; sequence TSTNQSGSSLSPRPLPSGKN. The N-linked (GlcNAc...) asparagine glycan is linked to asparagine 271. Positions 273–287 are enriched in low complexity; it reads SGSSLSPRPLPSGKN.

Belongs to the ZIP transporter (TC 2.A.5) family.

The protein resides in the golgi apparatus. Its subcellular location is the trans-Golgi network membrane. It is found in the cell membrane. It localises to the cytoplasm. The protein localises to the perinuclear region. The protein resides in the mitochondrion. Its subcellular location is the nucleus. The catalysed reaction is Zn(2+)(in) = Zn(2+)(out). In terms of biological role, transports zinc ions across cell and organelle membranes into the cytoplasm and regulates intracellular zinc homeostasis. Participates in the zinc ions efflux out of the secretory compartments. Regulates intracellular zinc level, resulting in the enhancement of AKT1 and MAPK3/MAPK1 (Erk1/2) phosphorylation in response to the BCR activation. Also functions as a membrane androgen receptor that mediates, through a G protein, the non-classical androgen signaling pathway, characterized by the activation of MAPK3/MAPK1 (Erk1/2) and transcription factors CREB1 or ATF1. This pathway contributes to CLDN1 and CLDN5 expression and tight junction formation between adjacent Sertoli cells. Mediates androgen-induced vascular endothelial cell proliferation through activation of an inhibitory G protein leading to the AKT1 and MAPK3/MAPK1 (Erk1/2) activation which in turn modulate inhibition (phosphorylation) of GSK3B and CCND1 transcription. Moreover, has dual functions as a membrane-bound androgen receptor and as an androgen-dependent zinc transporter both of which are mediated through an inhibitory G protein (Gi) that mediates both MAP kinase and zinc signaling leading to the androgen-dependent apoptotic process. The polypeptide is Zinc transporter ZIP9 (Rattus norvegicus (Rat)).